The following is a 470-amino-acid chain: Putative dipeptidase TSTA_079200 (470 aa).

A helical membrane pass occupies residues 40-60 (AWLFGLGTLGIILASVLLNPF). Zn(2+)-binding residues include His-92 and Asp-94. Cys-143 and Cys-237 form a disulfide bridge. Asn-188 carries an N-linked (GlcNAc...) asparagine glycan. Glu-208 contacts Zn(2+). His-235 contacts substrate. His-279 and His-300 together coordinate Zn(2+). The substrate site is built by Arg-311 and Asp-371.

Belongs to the metallo-dependent hydrolases superfamily. Peptidase M19 family. The cofactor is Zn(2+).

It is found in the membrane. It carries out the reaction an L-aminoacyl-L-amino acid + H2O = 2 an L-alpha-amino acid. Functionally, hydrolyzes a wide range of dipeptides. The polypeptide is Putative dipeptidase TSTA_079200 (Talaromyces stipitatus (strain ATCC 10500 / CBS 375.48 / QM 6759 / NRRL 1006) (Penicillium stipitatum)).